Consider the following 285-residue polypeptide: Protease HtpX homolog (285 aa).

The next 2 membrane-spanning stretches (helical) occupy residues 7 to 27 (TAMLMAAITALFIVIGGMIGG) and 30 to 50 (GMTIALLFALGMNFFSYWFSD). Histidine 131 lines the Zn(2+) pocket. Glutamate 132 is a catalytic residue. Histidine 135 serves as a coordination point for Zn(2+). 2 helical membrane-spanning segments follow: residues 146-166 (ITATMAGAISAIANFAMFFGG) and 177-197 (IAGIAVALLAPIAGALIQMAI). Residue glutamate 202 participates in Zn(2+) binding.

Belongs to the peptidase M48B family. The cofactor is Zn(2+).

The protein resides in the cell inner membrane. In Burkholderia lata (strain ATCC 17760 / DSM 23089 / LMG 22485 / NCIMB 9086 / R18194 / 383), this protein is Protease HtpX homolog.